Here is a 401-residue protein sequence, read N- to C-terminus: NALCN channel auxiliary factor 2 (401 aa).

A helical transmembrane segment spans residues 42–62 (LASLLFFTALLSDHLWLCAGG). Residues Asn-77, Asn-97, Asn-153, and Asn-178 are each glycosylated (N-linked (GlcNAc...) asparagine). Residues 362-382 (LCVLVLFLLHTFISITTLQHC) traverse the membrane as a helical segment.

Belongs to the NALF family.

The protein resides in the membrane. Its function is as follows. Probable component of the NALCN channel complex, a channel that regulates the resting membrane potential and controls neuronal excitability. The protein is NALCN channel auxiliary factor 2 (nalf2) of Danio rerio (Zebrafish).